The primary structure comprises 457 residues: Bifunctional protein GlmU (457 aa).

Residues 1–229 (MYNCAIILAA…YEEIMGVNSR (229 aa)) form a pyrophosphorylase region. UDP-N-acetyl-alpha-D-glucosamine is bound by residues 8 to 11 (LAAG), Lys22, Gln73, and 78 to 79 (GT). Asp103 is a Mg(2+) binding site. UDP-N-acetyl-alpha-D-glucosamine is bound by residues Gly140, Glu155, Asn170, and Asn227. Position 227 (Asn227) interacts with Mg(2+). Positions 230-250 (VQLSEAEIVMRKRINHKHMVN) are linker. Positions 251–457 (GVTFIDCEST…WLDKKGLLKK (207 aa)) are N-acetyltransferase. Positions 332 and 350 each coordinate UDP-N-acetyl-alpha-D-glucosamine. His362 serves as the catalytic Proton acceptor. UDP-N-acetyl-alpha-D-glucosamine is bound by residues Tyr365 and Asn376. Acetyl-CoA is bound by residues 385 to 386 (NY), Ala422, and Arg439.

It in the N-terminal section; belongs to the N-acetylglucosamine-1-phosphate uridyltransferase family. This sequence in the C-terminal section; belongs to the transferase hexapeptide repeat family. In terms of assembly, homotrimer. The cofactor is Mg(2+).

It is found in the cytoplasm. It catalyses the reaction alpha-D-glucosamine 1-phosphate + acetyl-CoA = N-acetyl-alpha-D-glucosamine 1-phosphate + CoA + H(+). The enzyme catalyses N-acetyl-alpha-D-glucosamine 1-phosphate + UTP + H(+) = UDP-N-acetyl-alpha-D-glucosamine + diphosphate. Its pathway is nucleotide-sugar biosynthesis; UDP-N-acetyl-alpha-D-glucosamine biosynthesis; N-acetyl-alpha-D-glucosamine 1-phosphate from alpha-D-glucosamine 6-phosphate (route II): step 2/2. It participates in nucleotide-sugar biosynthesis; UDP-N-acetyl-alpha-D-glucosamine biosynthesis; UDP-N-acetyl-alpha-D-glucosamine from N-acetyl-alpha-D-glucosamine 1-phosphate: step 1/1. The protein operates within bacterial outer membrane biogenesis; LPS lipid A biosynthesis. Its function is as follows. Catalyzes the last two sequential reactions in the de novo biosynthetic pathway for UDP-N-acetylglucosamine (UDP-GlcNAc). The C-terminal domain catalyzes the transfer of acetyl group from acetyl coenzyme A to glucosamine-1-phosphate (GlcN-1-P) to produce N-acetylglucosamine-1-phosphate (GlcNAc-1-P), which is converted into UDP-GlcNAc by the transfer of uridine 5-monophosphate (from uridine 5-triphosphate), a reaction catalyzed by the N-terminal domain. The polypeptide is Bifunctional protein GlmU (Clostridium botulinum (strain Kyoto / Type A2)).